The chain runs to 832 residues: MLIKLFGKIFKNSNDRALKVINLIVKKINSLESTIEKLTDQQLSSKTIEFKNRISDGDNLNNILPEAYAVVREASKRIFNMRHFDVQLMGGIVLNRRCIAEMSTGEGKTLTSVLPAYLHSLLGKGVHIVTVNDYLAKRDANNNKPLFEFLGITVGINLPGLNNIEKRNAYLADITYGTNNEYGFDYLRDNMIFNENEKVQRNLYFALVDEVDSILIDESRTPLIISGPIKSNSDIYYKINKLVPNLIKQEKEDSENFQGNGHFTIDEKSKQINMTERGLILVENLLIKNHLMNKNDSLYSSKNISLMHHFISALRAHKLFFKNVDYIVKNNEIIIVDEHTGRTMHGRRWSDGLHQAIEAKEKVNINNENQTLASITFQNYFRLYEKLSGMTGTAYTEAAEFKAIYKLDTIIIPTNRPVIRNDLPDLIYMTEKEKINAIINDIKNCYSKNIPVLVGTISIEKSENISNILKKLRIKHNVLNAKFHELEAEIISQAGCPKSITIATNMAGRGTDIILGGNWKSEFFNKKNINKKRIKKIKESWVKKNNYVIKLGGLHIIGTERHESRRIDNQLRGRSGRQGDPGSSRFYVSMEDNLMRIFASNRIIQTMQKLGMKTGESIEHKWITKAISNAQKKVENRNFDMRKQLLDYDDVANEQRKAIYSQRTEILNSLDIKDIIDNIRKDVLKKIFEKYKTKHSEKINVNLIKIENLIKKYFCIEISILSLYKENKCNLEKLYKNILIIILKKYNEKENKIGSTNLRIFEKNIMIKTLDSFWREHLSSIDYLRQGIHLRGYAQKDPKQEYKRESFIMFENMLYELKIEVITIISNVKIKS.

Residues Gln-87, 105–109 (GEGKT), and Asp-512 each bind ATP.

It belongs to the SecA family. In terms of assembly, monomer and homodimer. Part of the essential Sec protein translocation apparatus which comprises SecA, SecYEG and auxiliary proteins SecDF-YajC and YidC.

It localises to the cell membrane. Its subcellular location is the cytoplasm. The catalysed reaction is ATP + H2O + cellular proteinSide 1 = ADP + phosphate + cellular proteinSide 2.. Functionally, part of the Sec protein translocase complex. Interacts with the SecYEG preprotein conducting channel. Has a central role in coupling the hydrolysis of ATP to the transfer of proteins into and across the cell membrane, serving as an ATP-driven molecular motor driving the stepwise translocation of polypeptide chains across the membrane. The polypeptide is Protein translocase subunit SecA (Wigglesworthia glossinidia brevipalpis).